We begin with the raw amino-acid sequence, 731 residues long: 1,4-alpha-glucan branching enzyme GlgB (731 aa).

The active-site Nucleophile is Asp-412. Glu-465 serves as the catalytic Proton donor.

The protein belongs to the glycosyl hydrolase 13 family. GlgB subfamily. In terms of assembly, monomer.

It catalyses the reaction Transfers a segment of a (1-&gt;4)-alpha-D-glucan chain to a primary hydroxy group in a similar glucan chain.. It functions in the pathway glycan biosynthesis; glycogen biosynthesis. Functionally, catalyzes the formation of the alpha-1,6-glucosidic linkages in glycogen by scission of a 1,4-alpha-linked oligosaccharide from growing alpha-1,4-glucan chains and the subsequent attachment of the oligosaccharide to the alpha-1,6 position. The chain is 1,4-alpha-glucan branching enzyme GlgB from Bordetella bronchiseptica (strain ATCC BAA-588 / NCTC 13252 / RB50) (Alcaligenes bronchisepticus).